The chain runs to 382 residues: Lipid-A-disaccharide synthase (382 aa).

Belongs to the LpxB family.

The enzyme catalyses 2-N,3-O-bis[(3R)-3-hydroxytetradecanoyl]-alpha-D-glucosaminyl 1-phosphate + UDP-2-N,3-O-bis[(3R)-3-hydroxytetradecanoyl]-alpha-D-glucosamine = lipid A disaccharide (E. coli) + UDP + H(+). It catalyses the reaction a lipid X + a UDP-2-N,3-O-bis[(3R)-3-hydroxyacyl]-alpha-D-glucosamine = a lipid A disaccharide + UDP + H(+). It functions in the pathway glycolipid biosynthesis; lipid IV(A) biosynthesis; lipid IV(A) from (3R)-3-hydroxytetradecanoyl-[acyl-carrier-protein] and UDP-N-acetyl-alpha-D-glucosamine: step 5/6. Condensation of UDP-2,3-diacylglucosamine and 2,3-diacylglucosamine-1-phosphate to form lipid A disaccharide, a precursor of lipid A, a phosphorylated glycolipid that anchors the lipopolysaccharide to the outer membrane of the cell. This is Lipid-A-disaccharide synthase from Salmonella heidelberg (strain SL476).